Reading from the N-terminus, the 170-residue chain is Odorant-binding protein 2b (170 aa).

The first 15 residues, 1 to 15, serve as a signal peptide directing secretion; the sequence is MKTLFLGVTLGLAAA. An intrachain disulfide couples cysteine 74 to cysteine 166.

This sequence belongs to the calycin superfamily. Lipocalin family. Strongly expressed in genital sphere organs such as the prostate and mammary glands.

The protein localises to the secreted. Its function is as follows. Probably binds and transports small hydrophobic volatile molecules. The chain is Odorant-binding protein 2b (OBP2B) from Homo sapiens (Human).